A 432-amino-acid chain; its full sequence is Glutamate-1-semialdehyde 2,1-aminomutase 2 (432 aa).

The residue at position 268 (K268) is an N6-(pyridoxal phosphate)lysine.

This sequence belongs to the class-III pyridoxal-phosphate-dependent aminotransferase family. HemL subfamily. As to quaternary structure, homodimer. Pyridoxal 5'-phosphate is required as a cofactor.

The protein resides in the cytoplasm. It carries out the reaction (S)-4-amino-5-oxopentanoate = 5-aminolevulinate. It participates in porphyrin-containing compound metabolism; protoporphyrin-IX biosynthesis; 5-aminolevulinate from L-glutamyl-tRNA(Glu): step 2/2. The protein is Glutamate-1-semialdehyde 2,1-aminomutase 2 of Listeria monocytogenes serotype 4b (strain CLIP80459).